We begin with the raw amino-acid sequence, 108 residues long: Nucleoid-associated protein Bpet3552 (108 aa).

Belongs to the YbaB/EbfC family. As to quaternary structure, homodimer.

Its subcellular location is the cytoplasm. The protein localises to the nucleoid. Binds to DNA and alters its conformation. May be involved in regulation of gene expression, nucleoid organization and DNA protection. The chain is Nucleoid-associated protein Bpet3552 from Bordetella petrii (strain ATCC BAA-461 / DSM 12804 / CCUG 43448).